The chain runs to 1317 residues: Kinesin-like protein KIF16B (1317 aa).

A Kinesin motor domain is found at serine 3–isoleucine 358. Glycine 102–serine 109 is a binding site for ATP. Residues valine 370–lysine 425 adopt a coiled-coil conformation. At serine 398 the chain carries Phosphoserine. In terms of domain architecture, FHA spans threonine 478–isoleucine 529. A Phosphothreonine modification is found at threonine 577. A Phosphoserine modification is found at serine 582. Coiled-coil stretches lie at residues glycine 595–valine 882 and leucine 936–aspartate 1087. Residues leucine 1036–glycine 1048 show a composition bias toward polar residues. The segment at leucine 1036–glutamine 1057 is disordered. Residue serine 1052 is modified to Phosphoserine. Residues aspartate 1182–threonine 1296 form the PX domain.

The protein belongs to the TRAFAC class myosin-kinesin ATPase superfamily. Kinesin family. Interacts with RAB14. Interacts with PTPN21. In terms of tissue distribution, primarily expressed in brain. Also present in kidney, liver, intestine, placenta, leukocytes, heart and skeletal muscle (at protein level).

The protein resides in the cytoplasm. It is found in the cytoskeleton. The protein localises to the early endosome membrane. Its subcellular location is the spindle. Functionally, plus end-directed microtubule-dependent motor protein involved in endosome transport and receptor recycling and degradation. Regulates the plus end motility of early endosomes and the balance between recycling and degradation of receptors such as EGF receptor (EGFR) and FGF receptor (FGFR). Regulates the Golgi to endosome transport of FGFR-containing vesicles during early development, a key process for developing basement membrane and epiblast and primitive endoderm lineages during early postimplantation development. This chain is Kinesin-like protein KIF16B (KIF16B), found in Homo sapiens (Human).